We begin with the raw amino-acid sequence, 260 residues long: MQDDLKNAPIGFFDSGLGGLSVLRKALEMMPNENYIYYGDSKHAPYGEKTPQEIRSLSFNAIEFLIKKGAKAIVIACNTATSAAAHDLREYYKDIPIIGIEPALKPAIKLHETGSVIVMATKATLTQEKFKNLMDKYGEHREVIPLPCPGLVEFIEAGDLEGEDVKNFLREKLNPYMDREISSIVLGCTHYPFVKDVIQDLVGEKVDIIDGSSGTIRELKRRLEENNMESESKKKGNLDIFNSLEDKKILELSKKLIEIK.

Substrate contacts are provided by residues 14–15 (DS) and 46–47 (YG). The active-site Proton donor/acceptor is the cysteine 77. Position 78–79 (78–79 (NT)) interacts with substrate. Cysteine 188 acts as the Proton donor/acceptor in catalysis. 189-190 (TH) is a binding site for substrate.

The protein belongs to the aspartate/glutamate racemases family.

The enzyme catalyses L-glutamate = D-glutamate. The protein operates within cell wall biogenesis; peptidoglycan biosynthesis. In terms of biological role, provides the (R)-glutamate required for cell wall biosynthesis. In Clostridium perfringens (strain 13 / Type A), this protein is Glutamate racemase.